The sequence spans 329 residues: MVNNIDFVVTWVNGNDPVWREEKKKYEVLDGRPTLNDETRYRDMDLFQYWFRAVEKHAPWVNNIYFITYGHLPEWLDANHPKLKIVKHEDYIPKEYLPTFSSNVIELNLFRIKELSEQFVLFSDDVFINTFLKEEDLFKNNLPRLLSIYRPLIPTKEFDYINFNHLLIMNRYFHDKKTLSQHKGKFFNVGYGKFNLYNLFSIFYSGIIGYHDAHVAMPHLKSTFAEIWNKEGVLLDRVCKNKFRSTKDVNHWLMSYWNIETNSFMPQTLRVGEYVPLAYSGKIESIIHKQKNKFLCINDDEHTENFINEVNFVRKIFEKKFPEKSKFEK.

This sequence belongs to the stealth family.

The sequence is that of Capsular polysaccharide phosphotransferase WcwK (wcwK) from Streptococcus pneumoniae.